Here is a 397-residue protein sequence, read N- to C-terminus: MNCISDFFTYETTKSVVVKSWTIGIINRAVQLLIISYFVGWVFLHEKAYQVRDTAIESSVVTKVKGFGRYANRVMDVSDYVTPPQGTSVFVIITKMIVTENQMQGFCPENEEKYRCVSDSQCGPERFPGGGILTGRCVNYSSVLRTCEIQGWCPTEVDTVEMPIMMEAENFTIFIKNSIRFPLFNFEKGNLLPNLTDKDIKRCRFHPEKAPFCPILRVGDVVKFAGQDFAKLARTGGVLGIKIGWVCDLDKAWDQCIPKYSFTRLDGVSEKSSVSPGYNFRFAKYYKMENGSEYRTLLKAFGIRFDVLVYGNAGKFNIIPTIISSVAAFTSVGVGTVLCDIILLNFLKGADHYKARKFEEVTETTLKGTASTNPVFASDQATVEKQSTDSGAYSIGH.

The Cytoplasmic portion of the chain corresponds to 1-20 (MNCISDFFTYETTKSVVVKS). A helical transmembrane segment spans residues 21 to 43 (WTIGIINRAVQLLIISYFVGWVF). Residues 44 to 322 (LHEKAYQVRD…AGKFNIIPTI (279 aa)) lie on the Extracellular side of the membrane. 2 residues coordinate ATP: Lys-63 and Lys-65. Cystine bridges form between Cys-107–Cys-153, Cys-116–Cys-137, and Cys-122–Cys-147. A Mg(2+)-binding site is contributed by Glu-111. N-linked (GlcNAc...) asparagine glycosylation occurs at Asn-139. Mg(2+) is bound at residue Asp-158. Asp-158 is a binding site for Ca(2+). Asn-170 carries N-linked (GlcNAc...) asparagine glycosylation. ATP is bound at residue Thr-172. Asn-194 carries an N-linked (GlcNAc...) asparagine glycan. 2 disulfides stabilise this stretch: Cys-203–Cys-213 and Cys-247–Cys-256. Residues Ser-275, Asn-279, and Arg-281 each contribute to the ATP site. Residue Asn-290 is glycosylated (N-linked (GlcNAc...) asparagine). Position 299 (Lys-299) interacts with ATP. The helical transmembrane segment at 323 to 341 (ISSVAAFTSVGVGTVLCDI) threads the bilayer. Residues 342-397 (ILLNFLKGADHYKARKFEEVTETTLKGTASTNPVFASDQATVEKQSTDSGAYSIGH) lie on the Cytoplasmic side of the membrane.

The protein belongs to the P2X receptor family. In terms of assembly, homotrimer. Forms heterotrimer with P2RX2. Heterotrimeric P2RX2/3 has a ligand dose-response profile that is distinct from either homotrimeric P2RX2 or P2RX3. Selectively expressed in sensory ganglia.

The protein resides in the cell membrane. The catalysed reaction is Ca(2+)(in) = Ca(2+)(out). The enzyme catalyses Na(+)(in) = Na(+)(out). With respect to regulation, has high sensitivity to ATP. Fast activation by external ATP. Exhibits rapid desensitization. Sensitives to the ATP agonist:alpha/beta-methylene-ATP. Subject to allosteric inhibition by AF-219. Mg(2+) and Ca(2+) slow deactivation of P2RX3. Its function is as follows. Extracellular ATP-activated non-selective cation channel. Plays particularly important role in sensory neurons where its activation is critical for gustatory, nociceptive responses, visceral reflexes and sensory hypersensitization. This Rattus norvegicus (Rat) protein is P2X purinoceptor 3 (P2rx3).